Here is a 305-residue protein sequence, read N- to C-terminus: Tyrosine recombinase XerC (305 aa).

The 87-residue stretch at 2 to 88 (TNKQRLVHLF…ALRSFYKFLL (87 aa)) folds into the Core-binding (CB) domain. A Tyr recombinase domain is found at 109 to 295 (RIPSFLYEEE…SKDSLRKTYM (187 aa)). Active-site residues include Arg-149, Lys-173, His-247, Arg-250, and His-273. Tyr-282 (O-(3'-phospho-DNA)-tyrosine intermediate) is an active-site residue.

The protein belongs to the 'phage' integrase family. XerC subfamily. As to quaternary structure, forms a cyclic heterotetrameric complex composed of two molecules of XerC and two molecules of XerD.

It is found in the cytoplasm. Its function is as follows. Site-specific tyrosine recombinase, which acts by catalyzing the cutting and rejoining of the recombining DNA molecules. The XerC-XerD complex is essential to convert dimers of the bacterial chromosome into monomers to permit their segregation at cell division. It also contributes to the segregational stability of plasmids. The sequence is that of Tyrosine recombinase XerC from Bacillus pumilus (strain SAFR-032).